A 371-amino-acid chain; its full sequence is MERISFGAFLSPLHPLGEDPGLSLWRDLELAEWLDQFGYEELWVGEHHSAGWGTISSPELFIATAAERTRRIRLGTGVVSLPYHHPFMVASRAVQLDHLTGGRFTLGVGAGSIPSDMHFLGIDPADTRRRTAESLDVIHRLLTGDEPVTRVTDWFELHDARLQLRPRRASGLPLAVSSAVSPFGMRLAGQYGAAPLSFGVPPRPGSSVDDLAAQWQHAVDSAAEHGRTIDRADWRVALSVHVADSREQALDDLVDGWMRYRNEYWALLGTPPVHSRTEARKALAELIDRRSTIVGSVDECIDAVRDVQEATGGFGRLLVNVLDWADREAMKRSFELFARFVAPRFNGSLDGVTASYGWVAEQARAQRAAAR.

It belongs to the bacterial luciferase oxidoreductase family. It depends on FMN as a cofactor.

The catalysed reaction is 4-hydroxyprotoasukamycin + NADH + O2 + H(+) = asukamycin + NAD(+) + H2O. It functions in the pathway antibiotic biosynthesis. Involved in the biosynthesis of the antibiotic asukamycin. Catalyzes the epoxidation of 4-hydroxyprotoasukamycin to the final product, asukamycin. Can also convert some 4-hydroxyprotoasukamycin derivatives to their asukamycin derivatives, but cannot use protoasukamycin as substrate. Can also use NADPH, but catalytic efficiency is 20-fold higher with NADH. The chain is 4-hydroxyprotoasukamycin monooxygenase from Streptomyces nodosus subsp. asukaensis.